Consider the following 250-residue polypeptide: Flavin-dependent thymidylate synthase (250 aa).

The region spanning 7-233 (LRVQLIAKTE…PQVFSDFEIV (227 aa)) is the ThyX domain. Residues Ser-71, 95–97 (RHR), and Gln-103 each bind FAD. DUMP-binding positions include 92–95 (ELIR), 103–107 (QLSQR), and Arg-172. Residues 95-105 (RHRHFSYSQLS) carry the ThyX motif motif. FAD-binding positions include 188-190 (NYR) and His-194. Arg-199 is a binding site for dUMP. Residue Arg-199 is the Involved in ionization of N3 of dUMP, leading to its activation of the active site.

This sequence belongs to the thymidylate synthase ThyX family. Homotetramer. FAD serves as cofactor.

The catalysed reaction is dUMP + (6R)-5,10-methylene-5,6,7,8-tetrahydrofolate + NADPH + H(+) = dTMP + (6S)-5,6,7,8-tetrahydrofolate + NADP(+). Its pathway is pyrimidine metabolism; dTTP biosynthesis. Its function is as follows. Catalyzes the reductive methylation of 2'-deoxyuridine-5'-monophosphate (dUMP) to 2'-deoxythymidine-5'-monophosphate (dTMP) while utilizing 5,10-methylenetetrahydrofolate (mTHF) as the methyl donor, and NADPH and FADH(2) as the reductant. This chain is Flavin-dependent thymidylate synthase, found in Mycolicibacterium vanbaalenii (strain DSM 7251 / JCM 13017 / BCRC 16820 / KCTC 9966 / NRRL B-24157 / PYR-1) (Mycobacterium vanbaalenii).